The sequence spans 59 residues: Cecropin-C type 1 (59 aa).

Positions 1–23 are cleaved as a signal peptide; sequence MNFTKIFVLIAMAALLLVGQSEA.

It localises to the secreted. Cecropins have lytic and antibacterial activity against several Gram-positive and Gram-negative bacteria. This chain is Cecropin-C type 1 (CECC1), found in Aedes albopictus (Asian tiger mosquito).